The chain runs to 376 residues: Chaperone protein DnaJ (376 aa).

In terms of domain architecture, J spans Asp-5–Gly-69. A CR-type zinc finger spans residues Gly-133–Thr-215. Zn(2+)-binding residues include Cys-146, Cys-149, Cys-163, Cys-166, Cys-189, Cys-192, Cys-203, and Cys-206. 4 CXXCXGXG motif repeats span residues Cys-146–Gly-153, Cys-163–Gly-170, Cys-189–Gly-196, and Cys-203–Gly-210.

Belongs to the DnaJ family. As to quaternary structure, homodimer. Zn(2+) is required as a cofactor.

It localises to the cytoplasm. Its function is as follows. Participates actively in the response to hyperosmotic and heat shock by preventing the aggregation of stress-denatured proteins and by disaggregating proteins, also in an autonomous, DnaK-independent fashion. Unfolded proteins bind initially to DnaJ; upon interaction with the DnaJ-bound protein, DnaK hydrolyzes its bound ATP, resulting in the formation of a stable complex. GrpE releases ADP from DnaK; ATP binding to DnaK triggers the release of the substrate protein, thus completing the reaction cycle. Several rounds of ATP-dependent interactions between DnaJ, DnaK and GrpE are required for fully efficient folding. Also involved, together with DnaK and GrpE, in the DNA replication of plasmids through activation of initiation proteins. The chain is Chaperone protein DnaJ from Listeria monocytogenes serotype 4a (strain HCC23).